A 457-amino-acid polypeptide reads, in one-letter code: Siroheme synthase 2 (457 aa).

The tract at residues 1 to 204 is precorrin-2 dehydrogenase /sirohydrochlorin ferrochelatase; sequence MDHLPIFCQL…DDEQAVTRIT (204 aa). NAD(+) contacts are provided by residues 22-23 and 43-44; these read DV and LA. Ser128 bears the Phosphoserine mark. The uroporphyrinogen-III C-methyltransferase stretch occupies residues 216–457; that stretch reads GEVVLVGAGP…RDKLNWFSSK (242 aa). Pro225 provides a ligand contact to S-adenosyl-L-methionine. Asp248 functions as the Proton acceptor in the catalytic mechanism. The active-site Proton donor is the Lys270. S-adenosyl-L-methionine contacts are provided by residues 301 to 303, Ile306, 331 to 332, Met382, and Gly411; these read GGD and TA.

The protein in the N-terminal section; belongs to the precorrin-2 dehydrogenase / sirohydrochlorin ferrochelatase family. This sequence in the C-terminal section; belongs to the precorrin methyltransferase family.

It carries out the reaction uroporphyrinogen III + 2 S-adenosyl-L-methionine = precorrin-2 + 2 S-adenosyl-L-homocysteine + H(+). The enzyme catalyses precorrin-2 + NAD(+) = sirohydrochlorin + NADH + 2 H(+). The catalysed reaction is siroheme + 2 H(+) = sirohydrochlorin + Fe(2+). It participates in cofactor biosynthesis; adenosylcobalamin biosynthesis; precorrin-2 from uroporphyrinogen III: step 1/1. Its pathway is cofactor biosynthesis; adenosylcobalamin biosynthesis; sirohydrochlorin from precorrin-2: step 1/1. The protein operates within porphyrin-containing compound metabolism; siroheme biosynthesis; precorrin-2 from uroporphyrinogen III: step 1/1. It functions in the pathway porphyrin-containing compound metabolism; siroheme biosynthesis; siroheme from sirohydrochlorin: step 1/1. It participates in porphyrin-containing compound metabolism; siroheme biosynthesis; sirohydrochlorin from precorrin-2: step 1/1. Its function is as follows. Multifunctional enzyme that catalyzes the SAM-dependent methylations of uroporphyrinogen III at position C-2 and C-7 to form precorrin-2 via precorrin-1. Then it catalyzes the NAD-dependent ring dehydrogenation of precorrin-2 to yield sirohydrochlorin. Finally, it catalyzes the ferrochelation of sirohydrochlorin to yield siroheme. The protein is Siroheme synthase 2 of Cronobacter sakazakii (strain ATCC BAA-894) (Enterobacter sakazakii).